Consider the following 544-residue polypeptide: Transcription factor bHLH119 (544 aa).

2 disordered regions span residues 12–59 (NGQV…QPPR) and 185–208 (VAST…PPSV). Residues 15–29 (VVRTSQPQRPSSGKP) are compositionally biased toward polar residues. Over residues 50-59 (LPLPLLQPPR) the composition is skewed to pro residues. Residue Thr-269 is modified to Phosphothreonine. Position 274 is a phosphoserine (Ser-274). Disordered regions lie at residues 342–364 (QGTE…MHNL) and 522–544 (QPPL…STSK). The region spanning 357 to 406 (RAADMHNLSERRRRERINERMKTLQELLPRCRKTDKVSMLEDVIEYVKSL) is the bHLH domain. A compositionally biased stretch (low complexity) spans 522-535 (QPPLPLQGQPTSQP). Phosphoserine is present on residues Ser-541 and Ser-543.

Homodimer.

It localises to the nucleus. The protein is Transcription factor bHLH119 (BHLH119) of Arabidopsis thaliana (Mouse-ear cress).